The sequence spans 200 residues: Protein GrpE (200 aa).

Positions 1–23 are enriched in acidic residues; it reads MEEEIKETSEDKEEENTEAEAVE. A disordered region spans residues 1–39; it reads MEEEIKETSEDKEEENTEAEAVENNEKSEENAGNVEEDE.

This sequence belongs to the GrpE family. In terms of assembly, homodimer.

The protein localises to the cytoplasm. Its function is as follows. Participates actively in the response to hyperosmotic and heat shock by preventing the aggregation of stress-denatured proteins, in association with DnaK and GrpE. It is the nucleotide exchange factor for DnaK and may function as a thermosensor. Unfolded proteins bind initially to DnaJ; upon interaction with the DnaJ-bound protein, DnaK hydrolyzes its bound ATP, resulting in the formation of a stable complex. GrpE releases ADP from DnaK; ATP binding to DnaK triggers the release of the substrate protein, thus completing the reaction cycle. Several rounds of ATP-dependent interactions between DnaJ, DnaK and GrpE are required for fully efficient folding. This is Protein GrpE from Brachyspira hyodysenteriae (strain ATCC 49526 / WA1).